Here is a 90-residue protein sequence, read N- to C-terminus: Envelope protein US9 homolog (90 aa).

Topologically, residues 1–63 are intravirion; the sequence is MEPLRLADAE…IRRRRRQTRA (63 aa). Residues 12–13 carry the Di-leucine internalization motif motif; it reads LL. The tract at residues 29–38 is acidic; the sequence is EAYYTESDDE. Residues 64-84 form a helical; Signal-anchor for type II membrane protein membrane-spanning segment; sequence AGFVAAFVLVALISGGLGALM. Topologically, residues 85 to 90 are virion surface; that stretch reads CWLAYR.

This sequence belongs to the alphaherpesvirinae envelope protein US9 family. Phosphorylated on serines within the acidic cluster. Phosphorylation determines whether endocytosed viral US9 traffics to the trans-Golgi network or recycles to the cell membrane.

It is found in the virion membrane. The protein localises to the host Golgi apparatus membrane. Its subcellular location is the host smooth endoplasmic reticulum membrane. It localises to the host cell membrane. Essential for the anterograde spread of the infection throughout the host nervous system. Together with the gE/gI heterodimer, US9 is involved in the sorting and transport of viral structural components toward axon tips. The chain is Envelope protein US9 homolog from Cercopithecine herpesvirus 1 (CeHV-1).